Here is an 83-residue protein sequence, read N- to C-terminus: U25-theraphotoxin-Cg1b (83 aa).

The N-terminal stretch at 1 to 23 is a signal peptide; sequence MRFHTLLFLSFLLLVSCALICTA. Positions 24–48 are excised as a propeptide; sequence QHPGLEKSGMFHENVGKGQHIEEKR. Disulfide bonds link C50–C66, C57–C71, and C65–C79.

This sequence belongs to the neurotoxin 07 (Beta/delta-agtx) family. 03 (aga-4) subfamily. JZTX sub-subfamily. As to expression, expressed by the venom gland.

Its subcellular location is the secreted. Probable ion channel inhibitor. This chain is U25-theraphotoxin-Cg1b, found in Chilobrachys guangxiensis (Chinese earth tiger tarantula).